The sequence spans 455 residues: Chromosomal replication initiator protein DnaA (455 aa).

The segment at 1–74 (MSEQEIWEKV…LYEAIGHEIA (74 aa)) is domain I, interacts with DnaA modulators. The interval 74–116 (APVFYTEEELKSLHTSEQKEENQPEQPAKKYTPGVDEAVIGGE) is domain II. Positions 85–95 (SLHTSEQKEEN) are enriched in basic and acidic residues. Residues 85–104 (SLHTSEQKEENQPEQPAKKY) form a disordered region. Residues 117–333 (QFNTHNTFET…GALTRVLAFS (217 aa)) form a domain III, AAA+ region region. ATP is bound by residues G161, G163, K164, and T165. Positions 334–455 (KLQGQPITTE…ENLEKEIRNQ (122 aa)) are domain IV, binds dsDNA.

It belongs to the DnaA family. Oligomerizes as a right-handed, spiral filament on DNA at oriC.

The protein localises to the cytoplasm. In terms of biological role, plays an essential role in the initiation and regulation of chromosomal replication. ATP-DnaA binds to the origin of replication (oriC) to initiate formation of the DNA replication initiation complex once per cell cycle. Binds the DnaA box (a 9 base pair repeat at the origin) and separates the double-stranded (ds)DNA. Forms a right-handed helical filament on oriC DNA; dsDNA binds to the exterior of the filament while single-stranded (ss)DNA is stabiized in the filament's interior. The ATP-DnaA-oriC complex binds and stabilizes one strand of the AT-rich DNA unwinding element (DUE), permitting loading of DNA polymerase. After initiation quickly degrades to an ADP-DnaA complex that is not apt for DNA replication. Binds acidic phospholipids. In Staphylococcus saprophyticus subsp. saprophyticus (strain ATCC 15305 / DSM 20229 / NCIMB 8711 / NCTC 7292 / S-41), this protein is Chromosomal replication initiator protein DnaA.